The sequence spans 110 residues: T cell receptor alpha variable 35 (110 aa).

Residues 1–19 (MLLEHLLIILWMQLTWVSG) form the signal peptide. The Ig-like domain occupies 20 to 110 (QQLNQSPQSM…DVGIYFCAGQ (91 aa)). Asn40 and Asn93 each carry an N-linked (GlcNAc...) asparagine glycan. Cys41 and Cys107 form a disulfide bridge.

Alpha-beta TR is a heterodimer composed of an alpha and beta chain; disulfide-linked. The alpha-beta TR is associated with the transmembrane signaling CD3 coreceptor proteins to form the TR-CD3 (TcR or TCR). The assembly of alpha-beta TR heterodimers with CD3 occurs in the endoplasmic reticulum where a single alpha-beta TR heterodimer associates with one CD3D-CD3E heterodimer, one CD3G-CD3E heterodimer and one CD247 homodimer forming a stable octameric structure. CD3D-CD3E and CD3G-CD3E heterodimers preferentially associate with TR alpha and TR beta chains, respectively. The association of the CD247 homodimer is the last step of TcR assembly in the endoplasmic reticulum and is required for transport to the cell surface.

The protein resides in the cell membrane. Its function is as follows. V region of the variable domain of T cell receptor (TR) alpha chain that participates in the antigen recognition. Alpha-beta T cell receptors are antigen specific receptors which are essential to the immune response and are present on the cell surface of T lymphocytes. Recognize peptide-major histocompatibility (MH) (pMH) complexes that are displayed by antigen presenting cells (APC), a prerequisite for efficient T cell adaptive immunity against pathogens. Binding of alpha-beta TR to pMH complex initiates TR-CD3 clustering on the cell surface and intracellular activation of LCK that phosphorylates the ITAM motifs of CD3G, CD3D, CD3E and CD247 enabling the recruitment of ZAP70. In turn ZAP70 phosphorylates LAT, which recruits numerous signaling molecules to form the LAT signalosome. The LAT signalosome propagates signal branching to three major signaling pathways, the calcium, the mitogen-activated protein kinase (MAPK) kinase and the nuclear factor NF-kappa-B (NF-kB) pathways, leading to the mobilization of transcription factors that are critical for gene expression and essential for T cell growth and differentiation. The T cell repertoire is generated in the thymus, by V-(D)-J rearrangement. This repertoire is then shaped by intrathymic selection events to generate a peripheral T cell pool of self-MH restricted, non-autoaggressive T cells. Post-thymic interaction of alpha-beta TR with the pMH complexes shapes TR structural and functional avidity. This Homo sapiens (Human) protein is T cell receptor alpha variable 35.